Here is a 294-residue protein sequence, read N- to C-terminus: Large ribosomal subunit protein uL18A (294 aa).

Position 10 is a phosphoserine (serine 10). Residue tyrosine 12 is modified to Phosphotyrosine. The residue at position 81 (serine 81) is a Phosphoserine.

Belongs to the universal ribosomal protein uL18 family. In terms of assembly, component of the large ribosomal subunit (LSU). Mature yeast ribosomes consist of a small (40S) and a large (60S) subunit. The 40S small subunit contains 1 molecule of ribosomal RNA (18S rRNA) and 33 different proteins (encoded by 57 genes). The large 60S subunit contains 3 rRNA molecules (25S, 5.8S and 5S rRNA) and 46 different proteins (encoded by 81 genes). Component of a hexameric 5S RNP precursor complex, composed of 5S RNA, rrs1, rpf2, rpl5a/rpl5b, rpl11a/rpl11b and syo1; this complex acts as a precursor for ribosome assembly. rpl5a/rpl5b/uL18 forms a heterotrimeric complex with syo1 and rpl11a/rpl11b/uL5. Interaction of this complex with KAP104 allows the nuclear import of the heterotrimer.

The protein localises to the cytoplasm. Its subcellular location is the nucleus. In terms of biological role, component of the ribosome, a large ribonucleoprotein complex responsible for the synthesis of proteins in the cell. The small ribosomal subunit (SSU) binds messenger RNAs (mRNAs) and translates the encoded message by selecting cognate aminoacyl-transfer RNA (tRNA) molecules. The large subunit (LSU) contains the ribosomal catalytic site termed the peptidyl transferase center (PTC), which catalyzes the formation of peptide bonds, thereby polymerizing the amino acids delivered by tRNAs into a polypeptide chain. The nascent polypeptides leave the ribosome through a tunnel in the LSU and interact with protein factors that function in enzymatic processing, targeting, and the membrane insertion of nascent chains at the exit of the ribosomal tunnel. This is Large ribosomal subunit protein uL18A (rpl501) from Schizosaccharomyces pombe (strain 972 / ATCC 24843) (Fission yeast).